We begin with the raw amino-acid sequence, 179 residues long: Large ribosomal subunit protein uL6 (179 aa).

It belongs to the universal ribosomal protein uL6 family. In terms of assembly, part of the 50S ribosomal subunit.

In terms of biological role, this protein binds to the 23S rRNA, and is important in its secondary structure. It is located near the subunit interface in the base of the L7/L12 stalk, and near the tRNA binding site of the peptidyltransferase center. This chain is Large ribosomal subunit protein uL6, found in Mycoplasmopsis pulmonis (strain UAB CTIP) (Mycoplasma pulmonis).